The primary structure comprises 279 residues: Universal stress protein MT2087 (279 aa).

It belongs to the universal stress protein A family.

This is Universal stress protein MT2087 from Mycobacterium tuberculosis (strain CDC 1551 / Oshkosh).